A 437-amino-acid chain; its full sequence is MLDLKFIREHPGTVKHAIAVKGVNLDLDELLRIDRELVELRQRVEALQTERNANAKLVPKATPEERPHLIQKGKDLAEDIKALEPQLRAHEDQLRQLLLRVPNIPHPSVPVGQDDSENVELRREGQLPEFAFPPLDHVELLERQGWSDPERVARVSGSRSYLLKGDAVLLEMAVLMFALDFLRGRGLTPLSTTALVRPETLVGSGHFPGGEDQVYKIEGDELMLAGTAEVPVNSLYAGEQLSYEELPLAFAAISAAFRSEAGSAGRDVRGLIRVHEFRKVEQYVMTRADEAEALRWFGAILENAEGLLRALELPYRVVQNCTGDMGAGKVLMYDIETWVPSEGKYRETHSCSYLGDWQARRTGLRYRDEHGKLVYAHTLNNTGIATPRILVPLLENHQQADGTIRVPEALRPYLGGREVLGVPVRAAAAEAKSPRNK.

Position 227–229 (227–229) interacts with L-serine; it reads TAE. Residues 258-260 and V274 contribute to the ATP site; that span reads RSE. E281 is an L-serine binding site. 347–350 lines the ATP pocket; sequence ETHS. Residue T382 participates in L-serine binding.

It belongs to the class-II aminoacyl-tRNA synthetase family. Type-1 seryl-tRNA synthetase subfamily. As to quaternary structure, homodimer. The tRNA molecule binds across the dimer.

It is found in the cytoplasm. The catalysed reaction is tRNA(Ser) + L-serine + ATP = L-seryl-tRNA(Ser) + AMP + diphosphate + H(+). It carries out the reaction tRNA(Sec) + L-serine + ATP = L-seryl-tRNA(Sec) + AMP + diphosphate + H(+). It functions in the pathway aminoacyl-tRNA biosynthesis; selenocysteinyl-tRNA(Sec) biosynthesis; L-seryl-tRNA(Sec) from L-serine and tRNA(Sec): step 1/1. Functionally, catalyzes the attachment of serine to tRNA(Ser). Is also able to aminoacylate tRNA(Sec) with serine, to form the misacylated tRNA L-seryl-tRNA(Sec), which will be further converted into selenocysteinyl-tRNA(Sec). This chain is Serine--tRNA ligase, found in Deinococcus geothermalis (strain DSM 11300 / CIP 105573 / AG-3a).